A 230-amino-acid chain; its full sequence is Cytochrome c oxidase subunit 2 (230 aa).

Residues 1–14 are Mitochondrial intermembrane-facing; sequence MAHPSQLGFQDAAS. A helical transmembrane segment spans residues 15–45; the sequence is PVMEELLHFHDHALMIVLLISTLVLYIIVAM. At 46 to 59 the chain is on the mitochondrial matrix side; sequence VSTKLTNKYILDSQ. A helical membrane pass occupies residues 60-87; that stretch reads EIEIVWTVLPAVILILIALPSLRILYLM. Residues 88–230 lie on the Mitochondrial intermembrane side of the membrane; sequence DEINDPHLTI…KWSTMMLEDA (143 aa). Cu cation is bound by residues H161, C196, E198, C200, H204, and M207. E198 contributes to the Mg(2+) binding site.

It belongs to the cytochrome c oxidase subunit 2 family. As to quaternary structure, component of the cytochrome c oxidase (complex IV, CIV), a multisubunit enzyme composed of 14 subunits. The complex is composed of a catalytic core of 3 subunits MT-CO1, MT-CO2 and MT-CO3, encoded in the mitochondrial DNA, and 11 supernumerary subunits COX4I, COX5A, COX5B, COX6A, COX6B, COX6C, COX7A, COX7B, COX7C, COX8 and NDUFA4, which are encoded in the nuclear genome. The complex exists as a monomer or a dimer and forms supercomplexes (SCs) in the inner mitochondrial membrane with NADH-ubiquinone oxidoreductase (complex I, CI) and ubiquinol-cytochrome c oxidoreductase (cytochrome b-c1 complex, complex III, CIII), resulting in different assemblies (supercomplex SCI(1)III(2)IV(1) and megacomplex MCI(2)III(2)IV(2)). Found in a complex with TMEM177, COA6, COX18, COX20, SCO1 and SCO2. Interacts with TMEM177 in a COX20-dependent manner. Interacts with COX20. Interacts with COX16. Cu cation serves as cofactor.

The protein localises to the mitochondrion inner membrane. The enzyme catalyses 4 Fe(II)-[cytochrome c] + O2 + 8 H(+)(in) = 4 Fe(III)-[cytochrome c] + 2 H2O + 4 H(+)(out). In terms of biological role, component of the cytochrome c oxidase, the last enzyme in the mitochondrial electron transport chain which drives oxidative phosphorylation. The respiratory chain contains 3 multisubunit complexes succinate dehydrogenase (complex II, CII), ubiquinol-cytochrome c oxidoreductase (cytochrome b-c1 complex, complex III, CIII) and cytochrome c oxidase (complex IV, CIV), that cooperate to transfer electrons derived from NADH and succinate to molecular oxygen, creating an electrochemical gradient over the inner membrane that drives transmembrane transport and the ATP synthase. Cytochrome c oxidase is the component of the respiratory chain that catalyzes the reduction of oxygen to water. Electrons originating from reduced cytochrome c in the intermembrane space (IMS) are transferred via the dinuclear copper A center (CU(A)) of subunit 2 and heme A of subunit 1 to the active site in subunit 1, a binuclear center (BNC) formed by heme A3 and copper B (CU(B)). The BNC reduces molecular oxygen to 2 water molecules using 4 electrons from cytochrome c in the IMS and 4 protons from the mitochondrial matrix. In Salmo salar (Atlantic salmon), this protein is Cytochrome c oxidase subunit 2 (mt-co2).